Here is a 230-residue protein sequence, read N- to C-terminus: Ribonuclease 3 (230 aa).

Residues 5–125 (YSRFYNILGY…VIGAIYLDSD (121 aa)) form the RNase III domain. Glu-40 serves as a coordination point for Mg(2+). Asp-44 is a catalytic residue. Mg(2+)-binding residues include Asp-111 and Glu-114. Glu-114 is a catalytic residue. One can recognise a DRBM domain in the interval 153–223 (DSKSKLQEIL…AEKMIEMLSQ (71 aa)).

The protein belongs to the ribonuclease III family. Homodimer. The cofactor is Mg(2+).

It localises to the cytoplasm. It catalyses the reaction Endonucleolytic cleavage to 5'-phosphomonoester.. In terms of biological role, digests double-stranded RNA. Involved in the processing of primary rRNA transcript to yield the immediate precursors to the large and small rRNAs (23S and 16S). Processes some mRNAs, and tRNAs when they are encoded in the rRNA operon. Processes pre-crRNA and tracrRNA of type II CRISPR loci if present in the organism. In Francisella tularensis subsp. tularensis (strain FSC 198), this protein is Ribonuclease 3.